Here is a 160-residue protein sequence, read N- to C-terminus: UPF0178 protein PSPA7_5991 (160 aa).

This sequence belongs to the UPF0178 family.

This chain is UPF0178 protein PSPA7_5991, found in Pseudomonas paraeruginosa (strain DSM 24068 / PA7) (Pseudomonas aeruginosa (strain PA7)).